We begin with the raw amino-acid sequence, 186 residues long: Superoxide dismutase [Cu-Zn] (186 aa).

The first 22 residues, 1-22, serve as a signal peptide directing secretion; sequence MNMKTLLALAVSAVCSVSVAQA. The Cu cation site is built by H79, H81, and H104. C86 and C182 are joined by a disulfide. Residues H104, H113, H122, and D125 each contribute to the Zn(2+) site. H160 contributes to the Cu cation binding site.

The protein belongs to the Cu-Zn superoxide dismutase family. Homodimer. It depends on Cu cation as a cofactor. Zn(2+) is required as a cofactor.

The protein resides in the periplasm. It carries out the reaction 2 superoxide + 2 H(+) = H2O2 + O2. Its function is as follows. Destroys radicals which are normally produced within the cells and which are toxic to biological systems. The sequence is that of Superoxide dismutase [Cu-Zn] (sodC) from Neisseria meningitidis serogroup A / serotype 4A (strain DSM 15465 / Z2491).